The following is a 113-amino-acid chain: Putative anti-sigma factor antagonist TM1081 homolog (113 aa).

In terms of domain architecture, STAS spans 1–110 (MFPYKIVEDV…DTISEALEEV (110 aa)). S55 bears the Phosphoserine mark.

It belongs to the anti-sigma-factor antagonist family. In terms of processing, phosphorylated on a serine residue.

In terms of biological role, in the phosphorylated form it could act as an anti-anti-sigma factor that counteracts an anti-sigma factor and thus releases a sigma factor from inhibition. This is Putative anti-sigma factor antagonist TM1081 homolog from Thermotoga neapolitana.